The chain runs to 1274 residues: MAPSKKAGKKGAVGGFLSGASKPQKVQKADWSEGFTKKKAAGVPDMTLLSTITNEAINDNLKVRFQNQEIYTYIAHVLISVNPFRDLGIYTNDVLNSYRGKNRLEMSPHVFAIAESAYYRMTTEKENQCVIISGESGAGKTEAAKRIMQYIAAVSGGAEGGGIEGIKEMVLATNPLLESFGCAKTLRNDNSSRHGKYLEIMFNGMGQPVGAQITNYLLEKNRVVGQIDDERDFHIFYQFTKGASAKMKEAFGLQGPEAYAYISRSGCLDVKSINDVSDFQETLRAMQVIGLTSDEQDSIFRILATILWLGNIDFVEGDDGNAAISDSGVADFAAYLLEVDSAQLQKVLLMRIMETQRGGRRGSVYEVPQNVAQASSGRDALAKALYNNLFEWIVSRVNISMKPQTPSQYVIGVLDIYGFEIFQDNSFEQLSINYVNEKLQQIFIELTLKAEQEEYVREQIKWTPIKFFDNSVVCSLIEDRRPAGIFATLNDATATAHADPSAADNSFIQRSSMLASNPNFEARGNKFLIKHYAGDVLYTVAGMTDKNKDTLIKDILDLIEGSKDPFLHTLFPDKVDHTSKKRPPTAGDKIKLSANLLVENLMNCQPHYIRTIKPNQHRSPTEYDDKAILHQIKYLGLQENIRVRRAGFAYRAEFSKMIQRFYLLSPATSYAGDYIWTGDDRSGCERILTDAKIKKEEWQMGVTKAFIKNPETLFYLEGERDRYWHTMASRIQRAWRAYVRRKHEAATKIQRFWRNQREALVYERKRDYGHQVLAGKKERRRFSLLGMRKFMGDYLDIAGGSAQGEMLRNAATISPAEQVHFSSRAELLVSKLGRSSKLSPRFLIITDKAVYFVVSQARDGRVSTSLERKIPLVTIKAISMTNLRDDFVALNVNACEEGDPIFTCVFKTEMITVILTLTGGNMSVNIGPTIDYAKKKDKRAVIKTQKNEAVRGDATYKSHTIQVGSGEPPNSLSNPMPPRKPKVKKAAKTASSSRPVNSGRPAAVALPGATKPAAPPALSSMPSHTPVVTKPTAIPTAAIGAARAPPSIPGRAAAPPPPPPPPPPAGPPKEFYKALYNFTGQEGEMNLVKGEEVEVKEKDDNGWWMVVKNGQEGWAPSNYLKKVEQAPPPPPPPPPPSRPVAARPPAASSAPTAPAVTNGSAVPSWKAKNAASATPSADSTPPTSRPASSASKVPPAIKAKPSIPAKPAIPAKPQVGAKPAPAIGGKPPVPTAPKVQPKAASKLGQVAQPAKAPGQLDLAAAFAKRAARAQQEED.

Residues 1 to 28 (MAPSKKAGKKGAVGGFLSGASKPQKVQK) form a disordered region. One can recognise a Myosin motor domain in the interval 41–721 (AGVPDMTLLS…TLFYLEGERD (681 aa)). An ATP-binding site is contributed by 134–141 (GESGAGKT). At Ser363 the chain carries Phosphoserine. Residues 410–492 (VIGVLDIYGF…AGIFATLNDA (83 aa)) are actin-binding. 2 consecutive IQ domains span residues 725 to 745 (HTMA…KHEA) and 746 to 771 (ATKI…YGHQ). One can recognise a TH1 domain in the interval 779 to 969 (RRRFSLLGMR…TIQVGSGEPP (191 aa)). Disordered regions lie at residues 951-1029 (RGDA…PVVT), 1042-1071 (ARAP…PKEF), and 1116-1248 (PSNY…QVAQ). The span at 957–974 (KSHTIQVGSGEPPNSLSN) shows a compositional bias: polar residues. Residues 1042-1053 (ARAPPSIPGRAA) show a composition bias toward low complexity. 2 stretches are compositionally biased toward pro residues: residues 1054–1067 (APPP…PAGP) and 1126–1138 (APPP…PPSR). The SH3 domain occupies 1067-1125 (PPKEFYKALYNFTGQEGEMNLVKGEEVEVKEKDDNGWWMVVKNGQEGWAPSNYLKKVEQ). 2 stretches are compositionally biased toward low complexity: residues 1139-1157 (PVAA…PAVT) and 1170-1226 (AASA…IGGK).

This sequence belongs to the TRAFAC class myosin-kinesin ATPase superfamily. Myosin family. Phosphorylation of the TEDS site (Ser-363) is required for the polarization of the actin cytoskeleton. Phosphorylation probably activates the myosin-I ATPase activity.

It is found in the cytoplasm. The protein localises to the cytoskeleton. Its subcellular location is the actin patch. Its function is as follows. Type-I myosin implicated in the organization of the actin cytoskeleton. Required for proper actin cytoskeleton polarization. At the cell cortex, assembles in patch-like structures together with proteins from the actin-polymerizing machinery and promotes actin assembly. Functions as actin nucleation-promoting factor (NPF) for the Arp2/3 complex. This is Myosin-1 (MYO1) from Cryptococcus neoformans var. neoformans serotype D (strain B-3501A) (Filobasidiella neoformans).